We begin with the raw amino-acid sequence, 131 residues long: Profilin-7 (131 aa).

C13 and C115 form a disulfide bridge. The Involved in PIP2 interaction signature appears at 81–97 (AVIRGKKGSGGITVKKT). Residue T111 is modified to Phosphothreonine.

The protein belongs to the profilin family. As to quaternary structure, occurs in many kinds of cells as a complex with monomeric actin in a 1:1 ratio. In terms of processing, phosphorylated by MAP kinases.

Its subcellular location is the cytoplasm. It is found in the cytoskeleton. Its function is as follows. Binds to actin and affects the structure of the cytoskeleton. At high concentrations, profilin prevents the polymerization of actin, whereas it enhances it at low concentrations. The sequence is that of Profilin-7 from Zea mays (Maize).